The chain runs to 107 residues: MENTFKLLFETIEERKRNPLPESYTNYLFSKGEDKILKKIGEECTEVIIASKNNDKEELVKEMVDVLYHCFVLLAEKNIPLEDIMEEVTERNGKLSRVGDRREIDTL.

It belongs to the PRA-PH family.

The protein resides in the cytoplasm. It catalyses the reaction 1-(5-phospho-beta-D-ribosyl)-ATP + H2O = 1-(5-phospho-beta-D-ribosyl)-5'-AMP + diphosphate + H(+). Its pathway is amino-acid biosynthesis; L-histidine biosynthesis; L-histidine from 5-phospho-alpha-D-ribose 1-diphosphate: step 2/9. The polypeptide is Phosphoribosyl-ATP pyrophosphatase (Bacillus anthracis (strain A0248)).